Reading from the N-terminus, the 484-residue chain is Calcium-dependent protein kinase 31 (484 aa).

Residue Gly2 is the site of N-myristoyl glycine attachment. The 263-residue stretch at 28–290 folds into the Protein kinase domain; sequence YILGDELGQG…AAEVLGHPWM (263 aa). ATP is bound by residues 34–42 and Lys57; that span reads LGQGQFGIT. Residue Asp156 is the Proton acceptor of the active site. Ser196 carries the phosphoserine modification. The tract at residues 295-325 is autoinhibitory domain; the sequence is ASDKPIDGVVLSRLKQFRDMNKLKKVALKVI. EF-hand domains are found at residues 332–367, 368–403, 404–439, and 444–474; these read EEIK…LGSN, LSKT…RYRL, DRDD…HGVG, and IKQI…GSSL. The Ca(2+) site is built by Asp345, Asp347, Ser349, Thr351, Glu356, Asp381, Asp383, Asn385, Thr387, Glu392, Asp417, Asp419, Asp421, His423, Glu428, Asp452, Asp454, Asp456, Lys458, and Glu463.

Belongs to the protein kinase superfamily. Ser/Thr protein kinase family. CDPK subfamily.

It is found in the membrane. It carries out the reaction L-seryl-[protein] + ATP = O-phospho-L-seryl-[protein] + ADP + H(+). It catalyses the reaction L-threonyl-[protein] + ATP = O-phospho-L-threonyl-[protein] + ADP + H(+). Its activity is regulated as follows. Activated by calcium. Autophosphorylation may play an important role in the regulation of the kinase activity. In terms of biological role, may play a role in signal transduction pathways that involve calcium as a second messenger. The protein is Calcium-dependent protein kinase 31 (CPK31) of Arabidopsis thaliana (Mouse-ear cress).